Reading from the N-terminus, the 85-residue chain is Small ribosomal subunit protein eS27 (85 aa).

Residues 38-60 (CHGCRTITTVFSHAQNVVICSSC) form a C4-type zinc finger.

The protein belongs to the eukaryotic ribosomal protein eS27 family. Requires Zn(2+) as cofactor.

This Dictyostelium discoideum (Social amoeba) protein is Small ribosomal subunit protein eS27 (rps27).